The following is a 46-amino-acid chain: Thymosin beta-a (46 aa).

Residues threonine 21–proline 30 show a composition bias toward polar residues. The segment at threonine 21–lysine 46 is disordered. The span at threonine 31–lysine 46 shows a compositional bias: basic and acidic residues.

It belongs to the thymosin beta family.

Its subcellular location is the cytoplasm. It localises to the cytoskeleton. In terms of biological role, plays an important role in the organization of the cytoskeleton. Binds to and sequesters actin monomers (G actin) and therefore inhibits actin polymerization. This Cyprinus carpio (Common carp) protein is Thymosin beta-a.